A 618-amino-acid polypeptide reads, in one-letter code: C2H2 finger domain transcription factor sebA (618 aa).

The interval 394–488 is disordered; the sequence is GDATQSTEEM…RGRKQSLTDD (95 aa). Basic residues predominate over residues 406–416; that stretch reads KKRVTSRRSLK. 2 stretches are compositionally biased toward low complexity: residues 417 to 432 and 443 to 458; these read KASTSESSSDSLAKKT and SDTTSTVQQSTASSRQ. Over residues 459 to 469 the composition is skewed to polar residues; that stretch reads NSTANTSNSES. C2H2-type zinc fingers lie at residues 493 to 516 and 522 to 544; these read FVCSLCSRRFRRQEHLKRHYRSLH and FECHECGKKFSRSDNLAQHARTH. Over residues 582–597 the composition is skewed to low complexity; it reads NAATSKSTTSESSDGT. The disordered stretch occupies residues 582-618; that stretch reads NAATSKSTTSESSDGTISDTSSVGGRPAKKRRRDDHV. Residues 608–618 show a composition bias toward basic residues; that stretch reads PAKKRRRDDHV.

The protein localises to the nucleus. The protein resides in the cytoplasm. Transcription factor that is involved in the response to heat shock, oxidative stress, and poor nutrient conditions. Controls expression of oxidative stress response genes such as ccp1, cat1, cat2, sod2; as well as of heat shock genes such as hsf1, hsp30 and hsp90. Negatively controls the expression of the fumiquinazoline (fmq) cluster via binding to the STRE motifs at the fmqA-D promoters. Plays a role in virulence. In Aspergillus fumigatus (strain ATCC MYA-4609 / CBS 101355 / FGSC A1100 / Af293) (Neosartorya fumigata), this protein is C2H2 finger domain transcription factor sebA.